We begin with the raw amino-acid sequence, 837 residues long: Periplasmic nitrate reductase (837 aa).

The tat-type signal signal peptide spans methionine 1–alanine 31. One can recognise a 4Fe-4S Mo/W bis-MGD-type domain in the interval isoleucine 37–aspartate 93. [4Fe-4S] cluster-binding residues include cysteine 44, cysteine 47, cysteine 51, and cysteine 79. Mo-bis(molybdopterin guanine dinucleotide) is bound by residues lysine 81, glutamine 148, asparagine 173, cysteine 177, tryptophan 210–methionine 217, serine 241–histidine 245, and glutamine 260–aspartate 262. A disordered region spans residues glutamate 308 to lysine 329. The span at alanine 319–lysine 329 shows a compositional bias: basic and acidic residues. Mo-bis(molybdopterin guanine dinucleotide) is bound by residues methionine 381, glutamine 385, asparagine 491, serine 517–aspartate 518, lysine 540, aspartate 567, and threonine 727–threonine 736. Residue phenylalanine 803 participates in substrate binding. Residues asparagine 811 and lysine 828 each contribute to the Mo-bis(molybdopterin guanine dinucleotide) site.

The protein belongs to the prokaryotic molybdopterin-containing oxidoreductase family. NasA/NapA/NarB subfamily. In terms of assembly, component of the periplasmic nitrate reductase NapAB complex composed of NapA and NapB. It depends on [4Fe-4S] cluster as a cofactor. Mo-bis(molybdopterin guanine dinucleotide) serves as cofactor. Predicted to be exported by the Tat system. The position of the signal peptide cleavage has not been experimentally proven.

It localises to the periplasm. The enzyme catalyses 2 Fe(II)-[cytochrome] + nitrate + 2 H(+) = 2 Fe(III)-[cytochrome] + nitrite + H2O. Functionally, catalytic subunit of the periplasmic nitrate reductase complex NapAB. Receives electrons from NapB and catalyzes the reduction of nitrate to nitrite. This Dechloromonas aromatica (strain RCB) protein is Periplasmic nitrate reductase.